The chain runs to 342 residues: Dihydroorotate dehydrogenase (quinone) (342 aa).

FMN is bound by residues 65–69 and T89; that span reads AGLDK. Position 69 (K69) interacts with substrate. 114-118 provides a ligand contact to substrate; sequence NRMGF. FMN contacts are provided by N142 and N175. N175 is a substrate binding site. S178 serves as the catalytic Nucleophile. Residue N180 participates in substrate binding. FMN is bound by residues K220 and T248. 249 to 250 contacts substrate; that stretch reads NT. FMN is bound by residues G271, G300, and 321–322; that span reads YT.

Belongs to the dihydroorotate dehydrogenase family. Type 2 subfamily. As to quaternary structure, monomer. Requires FMN as cofactor.

It is found in the cell membrane. It catalyses the reaction (S)-dihydroorotate + a quinone = orotate + a quinol. The protein operates within pyrimidine metabolism; UMP biosynthesis via de novo pathway; orotate from (S)-dihydroorotate (quinone route): step 1/1. Functionally, catalyzes the conversion of dihydroorotate to orotate with quinone as electron acceptor. This Burkholderia pseudomallei (strain 668) protein is Dihydroorotate dehydrogenase (quinone).